The chain runs to 122 residues: Large ribosomal subunit protein uL14c (122 aa).

This sequence belongs to the universal ribosomal protein uL14 family. Part of the 50S ribosomal subunit.

It is found in the plastid. The protein resides in the chloroplast. Functionally, binds to 23S rRNA. The sequence is that of Large ribosomal subunit protein uL14c from Porphyra purpurea (Red seaweed).